The sequence spans 847 residues: DNA ligase (847 aa).

The segment covering 1 to 22 (MSDTTTGSDAADAAVPATTPAD) has biased composition (low complexity). Residues 1–23 (MSDTTTGSDAADAAVPATTPADL) are disordered. NAD(+) contacts are provided by residues 54-58 (DAEYD), 104-105 (SL), and Glu-135. Residue Lys-137 is the N6-AMP-lysine intermediate of the active site. NAD(+) is bound by residues Arg-158, Glu-195, Lys-326, and Lys-350. Residues Cys-444, Cys-447, Cys-463, and Cys-469 each coordinate Zn(2+). One can recognise a BRCT domain in the interval 686–775 (AAGGVLAGLA…PDAIALPEAD (90 aa)). A disordered region spans residues 770–847 (ALPEADPVPD…AEPDGPAETP (78 aa)). 2 stretches are compositionally biased toward low complexity: residues 786–807 (DGGS…ATAE) and 819–833 (PAAA…VEAG).

Belongs to the NAD-dependent DNA ligase family. LigA subfamily. Requires Mg(2+) as cofactor. The cofactor is Mn(2+).

It carries out the reaction NAD(+) + (deoxyribonucleotide)n-3'-hydroxyl + 5'-phospho-(deoxyribonucleotide)m = (deoxyribonucleotide)n+m + AMP + beta-nicotinamide D-nucleotide.. In terms of biological role, DNA ligase that catalyzes the formation of phosphodiester linkages between 5'-phosphoryl and 3'-hydroxyl groups in double-stranded DNA using NAD as a coenzyme and as the energy source for the reaction. It is essential for DNA replication and repair of damaged DNA. In Clavibacter sepedonicus (Clavibacter michiganensis subsp. sepedonicus), this protein is DNA ligase.